The chain runs to 117 residues: Glycine cleavage system H-like protein (117 aa).

One can recognise a Lipoyl-binding domain in the interval 21–103 (IVKLGLSSQM…ESEGWFVVLQ (83 aa)). Lys-62 is modified (N6-lipoyllysine).

It belongs to the GcvH family. The cofactor is (R)-lipoate.

The chain is Glycine cleavage system H-like protein from Chlamydia trachomatis serovar L2 (strain ATCC VR-902B / DSM 19102 / 434/Bu).